The primary structure comprises 941 residues: Zinc finger protein su(Hw) (941 aa).

Disordered stretches follow at residues 1–97 (MSAS…APAA) and 176–211 (ENNN…NSSQ). Residues 47–57 (STTTTTSRTPS) show a composition bias toward low complexity. The segment covering 185 to 202 (VTEDDEDLGEDGDEDGED) has biased composition (acidic residues). Residue threonine 186 is modified to Phosphothreonine. A C2H2-type 1; atypical zinc finger spans residues 220–242 (HVCGKCYKTFRRVQSLKKHLEFC). Residues 290–313 (INCPDCPKSFKTQTSYERHIFITH) form a C2H2-type 2 zinc finger. A C2H2-type 3; atypical zinc finger spans residues 319 to 341 (FPCSICNANLRSEALLALHEEQH). 9 C2H2-type zinc fingers span residues 348 to 366 (YACK…LKRH), 380 to 402 (MSCK…LKQH), 413 to 435 (YMCH…IRTH), 441 to 463 (FDCD…RRYH), 469 to 491 (YSCT…MKRH), 497 to 519 (HKCD…SKTH), 523 to 545 (FPCE…VKTH), 553 to 577 (FSCA…EGKH), and 596 to 619 (TDCA…RTVH). Residues 760–860 (ILTEEDIKLK…PIDDVIEYVL (101 aa)) form an interaction with mod(mdg4) region. A disordered region spans residues 864-941 (DQDEGGLDKD…KKPVGEQEKA (78 aa)). Composition is skewed to basic and acidic residues over residues 869-880 (GLDKDNESHSGD) and 891-941 (KTNE…QEKA).

As to quaternary structure, component of the gypsy chromatin insulator complex, composed of Cp190, mod(mdg4) and su(Hw). The gypsy chromatin insulator complex interacts with Topors via mod(mdg4) and su(Hw). Upon ecdysone stimulation, interacts with Nup98.

The protein localises to the nucleus. It localises to the chromosome. In terms of biological role, component of the gypsy chromatin insulator complex which is required for the function of the gypsy chromatin insulator and other endogenous chromatin insulators. Chromatin insulators are regulatory elements which establish independent domains of transcriptional activity within eukaryotic genomes. Insulators have two defining properties; they can block the communication between an enhancer and a promoter when placed between them and can also buffer transgenes from position effect variegation (PEV). Insulators are proposed to structure the chromatin fiber into independent domains of differing transcriptional potential by promoting the formation of distinct chromatin loops. This chromatin looping may involve the formation of insulator bodies, where homotypic interactions between individual subunits of the insulator complex could promote the clustering of widely spaced insulators at the nuclear periphery. Within the gypsy insulator complex, this protein binds specifically to a region of the gypsy element located 3' of the 5' long terminal repeat (LTR), and may also mediate interaction with other endogenous insulators at sites distinct from those recognized by Cp190. Cooperates with pita and cliff to recruit Cp190 and regulate insulator function at the front-ultraabdominal (Fub) boundary. The chain is Zinc finger protein su(Hw) from Drosophila melanogaster (Fruit fly).